Here is a 419-residue protein sequence, read N- to C-terminus: Innexin-2 (419 aa).

A run of 4 helical transmembrane segments spans residues 33–53 (AWFT…KQYF), 108–128 (PLVL…WNLF), 184–204 (INYF…MVLL), and 270–290 (LYIC…AGMI).

The protein belongs to the pannexin family.

It localises to the cell membrane. It is found in the cell junction. The protein localises to the gap junction. In terms of biological role, structural component of the gap junctions. This chain is Innexin-2 (inx-2), found in Caenorhabditis elegans.